A 201-amino-acid chain; its full sequence is Probable molybdenum cofactor guanylyltransferase (201 aa).

Residues 16 to 18 (LAG), lysine 28, aspartate 75, and aspartate 107 each bind GTP. Aspartate 107 lines the Mg(2+) pocket.

It belongs to the MobA family. Requires Mg(2+) as cofactor.

Its subcellular location is the cytoplasm. It catalyses the reaction Mo-molybdopterin + GTP + H(+) = Mo-molybdopterin guanine dinucleotide + diphosphate. Its function is as follows. Transfers a GMP moiety from GTP to Mo-molybdopterin (Mo-MPT) cofactor (Moco or molybdenum cofactor) to form Mo-molybdopterin guanine dinucleotide (Mo-MGD) cofactor. The sequence is that of Probable molybdenum cofactor guanylyltransferase from Mycobacterium bovis (strain ATCC BAA-935 / AF2122/97).